The primary structure comprises 549 residues: Guanine nucleotide-binding protein-like 3 (549 aa).

Residues 1–45 (MKRPKLKKASKRMTCHKRYKIQKKVREHHRKLRKEAKKRGHKKPR) are compositionally biased toward basic residues. Disordered regions lie at residues 1–56 (MKRP…SAPF) and 73–104 (ELKQ…SNVE). Residues 2–46 (KRPKLKKASKRMTCHKRYKIQKKVREHHRKLRKEAKKRGHKKPRK) are basic. A coiled-coil region spans residues 56–95 (FKEALLREAELRKQRLEELKQQQKLDRQKELEKKRKLETN). Residues 73–96 (ELKQQQKLDRQKELEKKRKLETNP) are compositionally biased toward basic and acidic residues. K79 carries the post-translational modification N6-acetyllysine. Glycyl lysine isopeptide (Lys-Gly) (interchain with G-Cter in SUMO2) cross-links involve residues K91 and K99. At S101 the chain carries Phosphoserine. Glycyl lysine isopeptide (Lys-Gly) (interchain with G-Cter in SUMO2) cross-links involve residues K114, K179, K196, K253, K267, and K275. The 182-residue stretch at 131–312 (CQELKKVIEA…IIDSPSFIVS (182 aa)) folds into the CP-type G domain. 178–181 (NKSD) is a binding site for GTP. 261–268 (GFPNVGKS) lines the GTP pocket. Positions 282-456 (VGVSMGLTRS…HLANSILFQS (175 aa)) are intermediate. 305 to 308 (DSPS) contacts GTP. The acidic stretch occupies residues 465–543 (EEKDIHEELP…KIIEEDDAYD (79 aa)). A compositionally biased stretch (basic and acidic residues) spans 474 to 483 (PKRKERKQEE). Positions 474–532 (PKRKERKQEEREDDKDSDQETVDEEVDENSSGMFAAEETGEALSEETTAGEQSTRSFIL) are disordered. Positions 484–501 (REDDKDSDQETVDEEVDE) are enriched in acidic residues. Phosphoserine is present on residues S490, S504, S517, and S529. Residues 518 to 529 (EETTAGEQSTRS) show a composition bias toward polar residues.

Belongs to the TRAFAC class YlqF/YawG GTPase family. Interacts with MDM2; this interaction stabilizes MDM2. Interaction with MDM2 occurs in the nucleoplasm and is triggered by a nucleolar release mechanism, such as mitosis-induced nucleolar disassembly. Indirectly interacts with TP53, via MDM2-binding. Interacts with TSC22D1 isoform 2. As to expression, increased levels in lung tissue in cancer patients.

The protein localises to the nucleus. It is found in the nucleolus. May be required to maintain the proliferative capacity of stem cells. Stabilizes MDM2 by preventing its ubiquitination, and hence proteasomal degradation. This Homo sapiens (Human) protein is Guanine nucleotide-binding protein-like 3 (GNL3).